The primary structure comprises 113 residues: Putative pterin-4-alpha-carbinolamine dehydratase (113 aa).

It belongs to the pterin-4-alpha-carbinolamine dehydratase family.

It carries out the reaction (4aS,6R)-4a-hydroxy-L-erythro-5,6,7,8-tetrahydrobiopterin = (6R)-L-erythro-6,7-dihydrobiopterin + H2O. The sequence is that of Putative pterin-4-alpha-carbinolamine dehydratase from Nitrosospira multiformis (strain ATCC 25196 / NCIMB 11849 / C 71).